The chain runs to 504 residues: Maturase K (504 aa).

This sequence belongs to the intron maturase 2 family. MatK subfamily.

The protein resides in the plastid. The protein localises to the chloroplast. Functionally, usually encoded in the trnK tRNA gene intron. Probably assists in splicing its own and other chloroplast group II introns. In Adansonia digitata (Baobab tree), this protein is Maturase K.